The primary structure comprises 1137 residues: Calcium-activated potassium channel subunit alpha-1 (1137 aa).

Topologically, residues 1–44 are extracellular; the sequence is MSNNINANNLNTDSSSSPVNVPKMDALIIPVTMEVPCDSRGQRM. The helical transmembrane segment at 45 to 65 threads the bilayer; it reads WWAFLASSMVTFFGGLFIILL. Residues 66–137 lie on the Cytoplasmic side of the membrane; the sequence is WRTLKYLWTV…MISAQTLTGR (72 aa). The chain crosses the membrane as a helical span at residues 138–158; the sequence is VLVVLVFALSIGALVIYFIDS. Residues 159 to 173 lie on the Extracellular side of the membrane; it reads SNPIESCQNFYKDFT. Residues 174-194 traverse the membrane as a helical segment; that stretch reads LQIDMAFNVFFLLYFGLRFIA. The Cytoplasmic segment spans residues 195 to 198; that stretch reads ANDK. Residues 199–219 form a helical membrane-spanning segment; sequence LWFWLEVNSVVDFFTVPPVFV. Topologically, residues 220–223 are extracellular; the sequence is SVYL. The chain crosses the membrane as a helical; Voltage-sensor span at residues 224–244; that stretch reads NRSWLGLRFLRALRLIQFSEI. Over 245-259 the chain is Cytoplasmic; that stretch reads LQFLNILKTSNSIKL. Residues 260-280 form a helical membrane-spanning segment; that stretch reads VNLCSIFISTWLTAAGFIHLV. The Extracellular portion of the chain corresponds to 281–294; that stretch reads ENSGDPWENFQNNQ. Positions 295–317 form an intramembrane region, pore-forming; that stretch reads QLTYWECVYLLMVTMSTVGYGDV. The Selectivity for potassium motif lies at 311-314; the sequence is TVGY. Residues 318–326 lie on the Extracellular side of the membrane; that stretch reads YAKTTLGRL. Residues 327-347 traverse the membrane as a helical segment; sequence FMVFFILGGLAMFASYVPEII. Residues 348-1137 are Cytoplasmic-facing; sequence ELIGNRKKYG…KQKYVQEDRL (790 aa). One can recognise an RCK N-terminal 1 domain in the interval 366-508; sequence RKHIVVCGHI…WNWKEGDDAI (143 aa). Residues E398, Q421, and E423 each coordinate Mg(2+). Residues 515 to 535 are segment S7; it reads LGFIAQSCLAPGLSTMLANLF. Residues 572–592 form a segment S8 region; that stretch reads LSFPAVCELVFAKLKLLMIAI. A heme-binding motif region spans residues 636 to 640; the sequence is CKACH. Residues 660–688 are disordered; that stretch reads EQPSTLSPKKKQRNGGMRNSPNSSPKLMR. The interval 738–758 is segment S9; it reads VLSGHVVVCIFGDVKSALIGL. The 145-residue stretch at 740-884 folds into the RCK N-terminal 2 domain; the sequence is SGHVVVCIFG…MDRSSPDNSP (145 aa). The Calcium bowl motif lies at 904 to 926; sequence TELVNDSNVQFLDQDDDDDPDTE. The Ca(2+) site is built by Q913, D916, D919, and D921. A segment S10 region spans residues 933-953; that stretch reads FACGTAFAVSVLDSLMSATYF. The span at 1088–1112 shows a compositional bias: low complexity; it reads ASLSHSSHSSYSSSKKSSSVHSIPS. The tract at residues 1088-1137 is disordered; sequence ASLSHSSHSSYSSSKKSSSVHSIPSTANRPNRTKTRDSREKQKYVQEDRL. The span at 1121-1137 shows a compositional bias: basic and acidic residues; the sequence is KTRDSREKQKYVQEDRL.

Belongs to the potassium channel family. Calcium-activated (TC 1.A.1.3) subfamily. KCa1.1/KCNMA1 sub-subfamily. In terms of assembly, homotetramer; which constitutes the calcium-activated potassium channel.

It localises to the cell membrane. The catalysed reaction is K(+)(in) = K(+)(out). Ethanol and carbon monoxide-bound heme increase channel activation. Heme inhibits channel activation. Its function is as follows. Potassium channel activated by both membrane depolarization or increase in cytosolic Ca(2+) that mediates export of K(+). It is also activated by the concentration of cytosolic Mg(2+). Its activation dampens the excitatory events that elevate the cytosolic Ca(2+) concentration and/or depolarize the cell membrane. It therefore contributes to repolarization of the membrane potential. Plays a key role in controlling excitability in a number of systems, such as regulation of the contraction of smooth muscle, the tuning of hair cells in the cochlea, regulation of transmitter release, and innate immunity. In smooth muscles, its activation by high level of Ca(2+), caused by ryanodine receptors in the sarcoplasmic reticulum, regulates the membrane potential. In cochlea cells, its number and kinetic properties partly determine the characteristic frequency of each hair cell and thereby helps to establish a tonotopic map. Highly sensitive to both iberiotoxin (IbTx) and charybdotoxin (CTX). The sequence is that of Calcium-activated potassium channel subunit alpha-1 (KCNMA1) from Gallus gallus (Chicken).